A 373-amino-acid chain; its full sequence is MKVANGYEYTAIMEKIAPKKLAMEGDPIGLQVGDLSKKVRKVMFTLDVLEEVVDEAIEKRVDLIIAHHPFLYRPTQHIDTTTKQGKMIKKLIKHDITVFAAHTNLDIAQGGVNDILADLLHLQDTTMIEETYTEPYCKIAVYVPENELESVRLALVNNGAGQIGTNYTECTFHTTGIGSFKPGTDANPTIGEKETLTSIPEVKIEAIFPQYLTETITKAVKIAHPYEEPAIDVYTLETQTYKEGLGRVGTLPKKISMVSFIDKLKTAFAIDNVRFVGDLKANVQKVAIIGGDGNKFIHQAKATGADVFITGDVYYHTAHDLLAINLPTIDAGHNIEKVMKGYLKNKMEEQAKILDYEAEFIVSEVNTDPFQFC.

Residues His67, His68, Asp106, His333, and Glu336 each contribute to the a divalent metal cation site.

It belongs to the GTP cyclohydrolase I type 2/NIF3 family. As to quaternary structure, homohexamer.

In Listeria innocua serovar 6a (strain ATCC BAA-680 / CLIP 11262), this protein is GTP cyclohydrolase 1 type 2 homolog.